Consider the following 571-residue polypeptide: Arginine--tRNA ligase (571 aa).

Positions 122 to 132 (PNIAKEMHVGH) match the 'HIGH' region motif.

This sequence belongs to the class-I aminoacyl-tRNA synthetase family. In terms of assembly, monomer.

It localises to the cytoplasm. The enzyme catalyses tRNA(Arg) + L-arginine + ATP = L-arginyl-tRNA(Arg) + AMP + diphosphate. The sequence is that of Arginine--tRNA ligase from Buchnera aphidicola subsp. Cinara cedri (strain Cc).